The following is a 126-amino-acid chain: Fluoride-specific ion channel FluC 3 (126 aa).

A run of 4 helical transmembrane segments spans residues 7–27 (MWVGLGGGIGSLLRWWIGLSI), 37–57 (LGTFLINISGAFVIGYLSILF), 68–87 (LMNTAVLTGILGGYTTFSSM), and 101–121 (AIAAGYLIISVLVGLAAAAFG). 2 residues coordinate Na(+): G79 and T82.

It belongs to the fluoride channel Fluc/FEX (TC 1.A.43) family.

The protein localises to the cell inner membrane. The enzyme catalyses fluoride(in) = fluoride(out). Its activity is regulated as follows. Na(+) is not transported, but it plays an essential structural role and its presence is essential for fluoride channel function. In terms of biological role, fluoride-specific ion channel. Important for reducing fluoride concentration in the cell, thus reducing its toxicity. The polypeptide is Fluoride-specific ion channel FluC 3 (Yersinia pestis).